We begin with the raw amino-acid sequence, 567 residues long: Laccase-7 (567 aa).

An N-terminal signal peptide occupies residues 1–23 (MEGVRVPIACALILLAISSITSA). Plastocyanin-like domains are found at residues 31–147 (NVQN…PKSG) and 157–310 (KEVP…YGGA). N-linked (GlcNAc...) asparagine glycans are attached at residues N34, N50, and N77. Positions 81 and 83 each coordinate Cu cation. Residue N115 is glycosylated (N-linked (GlcNAc...) asparagine). H126 and H128 together coordinate Cu cation. N-linked (GlcNAc...) asparagine glycans are attached at residues N186, N298, N339, N374, N386, N427, and N450. Positions 412-551 (DFPDQPPVKF…GMIFVVKNGP (140 aa)) constitute a Plastocyanin-like 3 domain. Cu cation-binding residues include H468, H471, H473, H530, C531, H532, and H536.

This sequence belongs to the multicopper oxidase family. Cu cation is required as a cofactor. Predominantly expressed in tissues other than the inflorescence stem.

The protein resides in the secreted. It is found in the extracellular space. It localises to the apoplast. It catalyses the reaction 4 hydroquinone + O2 = 4 benzosemiquinone + 2 H2O. Functionally, lignin degradation and detoxification of lignin-derived products. The protein is Laccase-7 (LAC7) of Arabidopsis thaliana (Mouse-ear cress).